The following is a 134-amino-acid chain: Small ribosomal subunit protein bS6 (134 aa).

The segment at 99 to 134 (PSQLAKSADEKRARKAPRSENFDNDQDDESNDDSDE) is disordered. Over residues 105 to 119 (SADEKRARKAPRSEN) the composition is skewed to basic and acidic residues. Residues 120-134 (FDNDQDDESNDDSDE) are compositionally biased toward acidic residues.

Belongs to the bacterial ribosomal protein bS6 family.

In terms of biological role, binds together with bS18 to 16S ribosomal RNA. The chain is Small ribosomal subunit protein bS6 from Psychrobacter sp. (strain PRwf-1).